Here is a 128-residue protein sequence, read N- to C-terminus: Modulator protein MzrA (128 aa).

The Cytoplasmic segment spans residues 1–13 (MLALLRPYLSTRV). Residues 14–34 (LCVLVVCFSALMLVAFIPTLF) traverse the membrane as a helical segment. At 35-128 (RNDTALQIRA…RLSLRKQSVG (94 aa)) the chain is on the periplasmic side.

It belongs to the MzrA family. Interacts with EnvZ.

The protein localises to the cell inner membrane. Its function is as follows. Modulates the activity of the EnvZ/OmpR two-component regulatory system, probably by directly modulating EnvZ enzymatic activity and increasing stability of phosphorylated OmpR. The sequence is that of Modulator protein MzrA from Erwinia billingiae (strain Eb661).